The following is a 393-amino-acid chain: NAD(P)H-quinone oxidoreductase subunit H, chloroplastic (393 aa).

Belongs to the complex I 49 kDa subunit family. As to quaternary structure, NDH is composed of at least 16 different subunits, 5 of which are encoded in the nucleus.

It localises to the plastid. Its subcellular location is the chloroplast thylakoid membrane. The catalysed reaction is a plastoquinone + NADH + (n+1) H(+)(in) = a plastoquinol + NAD(+) + n H(+)(out). It carries out the reaction a plastoquinone + NADPH + (n+1) H(+)(in) = a plastoquinol + NADP(+) + n H(+)(out). Its function is as follows. NDH shuttles electrons from NAD(P)H:plastoquinone, via FMN and iron-sulfur (Fe-S) centers, to quinones in the photosynthetic chain and possibly in a chloroplast respiratory chain. The immediate electron acceptor for the enzyme in this species is believed to be plastoquinone. Couples the redox reaction to proton translocation, and thus conserves the redox energy in a proton gradient. This chain is NAD(P)H-quinone oxidoreductase subunit H, chloroplastic, found in Chlorokybus atmophyticus (Soil alga).